The chain runs to 453 residues: Alpha-2B adrenergic receptor (453 aa).

Over 1–17 (MSGPTMDHQEPYSVQAT) the chain is Extracellular. Residues 18 to 42 (AAIASAITFLILFTIFGNALVILAV) traverse the membrane as a helical segment. Over 43–54 (LTSRSLRAPQNL) the chain is Cytoplasmic. A helical transmembrane segment spans residues 55-80 (FLVSLAAADILVATLIIPFSLANELL). The Extracellular segment spans residues 81–90 (GYWYFWRAWC). Cysteine 90 and cysteine 169 form a disulfide bridge. Residues 91–113 (EVYLALDVLFCTSSIVHLCAISL) form a helical membrane-spanning segment. Residues 114 to 135 (DRYWAVSRALEYNSKRTPRRIK) are Cytoplasmic-facing. Residues 136–158 (CIILTVWLIAAVISLPPLIYKGD) form a helical membrane-spanning segment. At 159–174 (QRPEPRGLPQCELNQE) the chain is on the extracellular side. The chain crosses the membrane as a helical span at residues 175–198 (AWYILASSIGSFFAPCLIMILVYL). The Cytoplasmic segment spans residues 199 to 375 (RIYVIAKRSH…LSREKRFTFV (177 aa)). The segment at 213–331 (GAKRGSGEGE…PASVCNPPLQ (119 aa)) is disordered. Residues 287 to 297 (GQGQKKGTSGA) are compositionally biased toward polar residues. Acidic residues predominate over residues 300-314 (EEGDEEDEEEVEECE). A helical membrane pass occupies residues 376–399 (LAVVIGVFVVCWFPFFFSYSLGAI). Over 400–408 (CPQHCKVPH) the chain is Extracellular. A helical membrane pass occupies residues 409–432 (GLFQFFFWIGYCNSSLNPVIYTVF). Topologically, residues 433–453 (NQDFRRAFRRILCRPWTQTGW) are cytoplasmic. Cysteine 445 carries the S-palmitoyl cysteine lipid modification.

It belongs to the G-protein coupled receptor 1 family. Adrenergic receptor subfamily. ADRA2B sub-subfamily. As to quaternary structure, interacts with RAB26. Interacts with PPP1R9B. Interacts with GGA1, GGA2 and GGA3.

Its subcellular location is the cell membrane. Functionally, alpha-2 adrenergic receptors mediate the catecholamine-induced inhibition of adenylate cyclase through the action of G proteins. The polypeptide is Alpha-2B adrenergic receptor (Adra2b) (Rattus norvegicus (Rat)).